The chain runs to 234 residues: Large ribosomal subunit protein uL1 (234 aa).

This sequence belongs to the universal ribosomal protein uL1 family. Part of the 50S ribosomal subunit.

Functionally, binds directly to 23S rRNA. The L1 stalk is quite mobile in the ribosome, and is involved in E site tRNA release. Its function is as follows. Protein L1 is also a translational repressor protein, it controls the translation of the L11 operon by binding to its mRNA. The sequence is that of Large ribosomal subunit protein uL1 from Sodalis glossinidius (strain morsitans).